A 569-amino-acid polypeptide reads, in one-letter code: CTP synthase (569 aa).

The tract at residues 1–276 is amidoligase domain; sequence MNQATPTKHV…DAYLVRRLDL (276 aa). Ser18 provides a ligand contact to CTP. Ser18 contacts UTP. ATP-binding positions include 19-24 and Asp76; that span reads SLGKGL. Mg(2+)-binding residues include Asp76 and Glu150. Residues 157 to 159, 197 to 202, and Lys233 contribute to the CTP site; these read DIE and KTKPTQ. Residues 197–202 and Lys233 contribute to the UTP site; that span reads KTKPTQ. The Glutamine amidotransferase type-1 domain occupies 301–550; that stretch reads TVALVGKYVD…VGAAIERQRE (250 aa). Gly364 lines the L-glutamine pocket. The Nucleophile; for glutamine hydrolysis role is filled by Cys391. L-glutamine-binding positions include 392-395, Glu415, and Arg476; that span reads LGLQ. Residues His523 and Glu525 contribute to the active site.

This sequence belongs to the CTP synthase family. Homotetramer.

The enzyme catalyses UTP + L-glutamine + ATP + H2O = CTP + L-glutamate + ADP + phosphate + 2 H(+). It catalyses the reaction L-glutamine + H2O = L-glutamate + NH4(+). It carries out the reaction UTP + NH4(+) + ATP = CTP + ADP + phosphate + 2 H(+). It functions in the pathway pyrimidine metabolism; CTP biosynthesis via de novo pathway; CTP from UDP: step 2/2. Its activity is regulated as follows. Allosterically activated by GTP, when glutamine is the substrate; GTP has no effect on the reaction when ammonia is the substrate. The allosteric effector GTP functions by stabilizing the protein conformation that binds the tetrahedral intermediate(s) formed during glutamine hydrolysis. Inhibited by the product CTP, via allosteric rather than competitive inhibition. In terms of biological role, catalyzes the ATP-dependent amination of UTP to CTP with either L-glutamine or ammonia as the source of nitrogen. Regulates intracellular CTP levels through interactions with the four ribonucleotide triphosphates. In Nocardioides sp. (strain ATCC BAA-499 / JS614), this protein is CTP synthase.